Here is a 251-residue protein sequence, read N- to C-terminus: Adenylate kinase (251 aa).

An ATP-binding site is contributed by 46–51; the sequence is GAGKGT. Positions 66–95 are NMP; the sequence is ATGDMLRSQVQQQTPLGVEAKKIMDAGGLV. AMP-binding positions include Thr67, Arg72, 93–95, 122–125, and Gln129; these read GLV and GFPR. Residues 163–200 form an LID region; the sequence is GRLVHPASGRSYHKVFNPPKKEMIDDITGEALVQRSDD. ATP is bound by residues Arg164 and 173 to 174; that span reads SY. Positions 197 and 208 each coordinate AMP. Residue Gln236 coordinates ATP.

This sequence belongs to the adenylate kinase family. AK2 subfamily. As to quaternary structure, monomer.

Its subcellular location is the cytoplasm. The protein resides in the cytosol. The protein localises to the mitochondrion intermembrane space. It carries out the reaction AMP + ATP = 2 ADP. Catalyzes the reversible transfer of the terminal phosphate group between ATP and AMP. Plays an important role in cellular energy homeostasis and in adenine nucleotide metabolism. Adenylate kinase activity is critical for regulation of the phosphate utilization and the AMP de novo biosynthesis pathways. The protein is Adenylate kinase of Yarrowia lipolytica (strain CLIB 122 / E 150) (Yeast).